The following is a 240-amino-acid chain: Pyridoxine 5'-phosphate synthase (240 aa).

Asn-7 lines the 3-amino-2-oxopropyl phosphate pocket. Asp-9–His-10 is a 1-deoxy-D-xylulose 5-phosphate binding site. Arg-18 serves as a coordination point for 3-amino-2-oxopropyl phosphate. His-43 serves as the catalytic Proton acceptor. 1-deoxy-D-xylulose 5-phosphate-binding residues include Arg-45 and His-50. The active-site Proton acceptor is Glu-70. Thr-100 is a 1-deoxy-D-xylulose 5-phosphate binding site. Catalysis depends on His-191, which acts as the Proton donor. Residues Gly-192 and Gly-213–His-214 each bind 3-amino-2-oxopropyl phosphate.

The protein belongs to the PNP synthase family. As to quaternary structure, homooctamer; tetramer of dimers.

Its subcellular location is the cytoplasm. It catalyses the reaction 3-amino-2-oxopropyl phosphate + 1-deoxy-D-xylulose 5-phosphate = pyridoxine 5'-phosphate + phosphate + 2 H2O + H(+). The protein operates within cofactor biosynthesis; pyridoxine 5'-phosphate biosynthesis; pyridoxine 5'-phosphate from D-erythrose 4-phosphate: step 5/5. In terms of biological role, catalyzes the complicated ring closure reaction between the two acyclic compounds 1-deoxy-D-xylulose-5-phosphate (DXP) and 3-amino-2-oxopropyl phosphate (1-amino-acetone-3-phosphate or AAP) to form pyridoxine 5'-phosphate (PNP) and inorganic phosphate. In Coxiella burnetii (strain Dugway 5J108-111), this protein is Pyridoxine 5'-phosphate synthase.